We begin with the raw amino-acid sequence, 381 residues long: Protein COS8 (381 aa).

At 1-42 (MKENEVKDEKSVDVLSFKQLEFQKTVLPQDVFRNELTWFCYE) the chain is on the extracellular side. The helical transmembrane segment at 43–63 (IYKSLAFRIWMLLWLPLSVWW) threads the bilayer. Over 64–72 (KLSSNWIHP) the chain is Cytoplasmic. The helical transmembrane segment at 73–93 (LIVSLLVLFLGPFFVLVICGL) threads the bilayer. Residues 94–237 (SRKRSLSKQL…WILKRIFNLR (144 aa)) lie on the Extracellular side of the membrane. Residues 238–258 (CLPLFLYYFLIVYTSGNADLI) traverse the membrane as a helical segment. Residues 259–381 (SRFLFPVVMF…QSARNEKPLK (123 aa)) are Cytoplasmic-facing.

This sequence belongs to the DUP/COS family.

The protein resides in the membrane. The sequence is that of Protein COS8 (COS8) from Saccharomyces cerevisiae (strain ATCC 204508 / S288c) (Baker's yeast).